Reading from the N-terminus, the 75-residue chain is UPF0235 protein Mvan_2846 (75 aa).

This sequence belongs to the UPF0235 family.

This chain is UPF0235 protein Mvan_2846, found in Mycolicibacterium vanbaalenii (strain DSM 7251 / JCM 13017 / BCRC 16820 / KCTC 9966 / NRRL B-24157 / PYR-1) (Mycobacterium vanbaalenii).